The primary structure comprises 814 residues: G-type lectin S-receptor-like serine/threonine-protein kinase At1g61400 (814 aa).

The signal sequence occupies residues 1 to 34; it reads MDFLFLLLERKNKHMGKKRVVLLWLSIFISFSSA. The region spanning 35–154 is the Bulb-type lectin domain; it reads EITEESPLSI…VSGRTLWESF (120 aa). The Extracellular portion of the chain corresponds to 35–436; that stretch reads EITEESPLSI…ELDVNKRKKT (402 aa). Residues Asn-63, Asn-104, Asn-127, and Asn-246 are each glycosylated (N-linked (GlcNAc...) asparagine). The EGF-like; atypical domain occupies 288-324; sequence PANSCDIYGVCGPFGFCVISVPPKCKCFKGFIPKSIE. Disulfide bonds link Cys-292/Cys-304 and Cys-298/Cys-312. 3 N-linked (GlcNAc...) asparagine glycosylation sites follow: Asn-330, Asn-346, and Asn-385. The PAN domain maps to 343–425; sequence CQGNSTGKDA…GELLSIRLAR (83 aa). Disulfide bonds link Cys-378-Cys-399 and Cys-382-Cys-388. Residues 437–457 form a helical membrane-spanning segment; it reads IIAITVSLTLFVILGFTAFGF. The Cytoplasmic portion of the chain corresponds to 458-814; the sequence is WRRRVEQNAL…EMTESVIHGR (357 aa). The 286-residue stretch at 500–785 folds into the Protein kinase domain; it reads FSLSNKLGHG…DLPLPKQPTF (286 aa). ATP contacts are provided by residues 506 to 514 and Lys-528; that span reads LGHGGFGSV. Ser-534 and Ser-549 each carry phosphoserine. Positions 589-606 are caM-binding; that stretch reads KKRLEIDWPKRFDIIQGI. Asp-625 functions as the Proton acceptor in the catalytic mechanism. Residues Ser-629 and Ser-642 each carry the phosphoserine modification. At Thr-659 the chain carries Phosphothreonine. Phosphoserine is present on residues Ser-702 and Ser-796.

The protein belongs to the protein kinase superfamily. Ser/Thr protein kinase family.

The protein resides in the cell membrane. The catalysed reaction is L-seryl-[protein] + ATP = O-phospho-L-seryl-[protein] + ADP + H(+). The enzyme catalyses L-threonyl-[protein] + ATP = O-phospho-L-threonyl-[protein] + ADP + H(+). This chain is G-type lectin S-receptor-like serine/threonine-protein kinase At1g61400, found in Arabidopsis thaliana (Mouse-ear cress).